The chain runs to 661 residues: UvrABC system protein B (661 aa).

The 158-residue stretch at lysine 25 to arginine 182 folds into the Helicase ATP-binding domain. Residue glycine 38–threonine 45 coordinates ATP. The short motif at tyrosine 91–isoleucine 114 is the Beta-hairpin element. The Helicase C-terminal domain maps to glutamine 430–isoleucine 592. Positions lysine 621–alanine 656 constitute a UVR domain.

The protein belongs to the UvrB family. In terms of assembly, forms a heterotetramer with UvrA during the search for lesions. Interacts with UvrC in an incision complex.

It is found in the cytoplasm. In terms of biological role, the UvrABC repair system catalyzes the recognition and processing of DNA lesions. A damage recognition complex composed of 2 UvrA and 2 UvrB subunits scans DNA for abnormalities. Upon binding of the UvrA(2)B(2) complex to a putative damaged site, the DNA wraps around one UvrB monomer. DNA wrap is dependent on ATP binding by UvrB and probably causes local melting of the DNA helix, facilitating insertion of UvrB beta-hairpin between the DNA strands. Then UvrB probes one DNA strand for the presence of a lesion. If a lesion is found the UvrA subunits dissociate and the UvrB-DNA preincision complex is formed. This complex is subsequently bound by UvrC and the second UvrB is released. If no lesion is found, the DNA wraps around the other UvrB subunit that will check the other stand for damage. The sequence is that of UvrABC system protein B from Rickettsia bellii (strain OSU 85-389).